The primary structure comprises 449 residues: UDP-glycosyltransferase 76E7 (449 aa).

Residues Ser275, 333 to 335 (APQ), 350 to 358 (HCGWNSTLE), and 372 to 375 (TTDQ) contribute to the UDP-alpha-D-glucose site.

Belongs to the UDP-glycosyltransferase family.

The chain is UDP-glycosyltransferase 76E7 (UGT76E7) from Arabidopsis thaliana (Mouse-ear cress).